We begin with the raw amino-acid sequence, 385 residues long: Cell division protein FtsZ (385 aa).

Residues 37–41, 125–127, E156, K160, and D204 each bind GTP; these read GGGSN and GTG.

It belongs to the FtsZ family. As to quaternary structure, homodimer. Polymerizes to form a dynamic ring structure in a strictly GTP-dependent manner. Interacts directly with several other division proteins.

The protein resides in the cytoplasm. Essential cell division protein that forms a contractile ring structure (Z ring) at the future cell division site. The regulation of the ring assembly controls the timing and the location of cell division. One of the functions of the FtsZ ring is to recruit other cell division proteins to the septum to produce a new cell wall between the dividing cells. Binds GTP and shows GTPase activity. The sequence is that of Cell division protein FtsZ from Helicobacter pylori (strain J99 / ATCC 700824) (Campylobacter pylori J99).